Here is a 292-residue protein sequence, read N- to C-terminus: Ribosomal RNA small subunit methyltransferase I (292 aa).

The protein belongs to the methyltransferase superfamily. RsmI family.

It localises to the cytoplasm. It catalyses the reaction cytidine(1402) in 16S rRNA + S-adenosyl-L-methionine = 2'-O-methylcytidine(1402) in 16S rRNA + S-adenosyl-L-homocysteine + H(+). Functionally, catalyzes the 2'-O-methylation of the ribose of cytidine 1402 (C1402) in 16S rRNA. This Buchnera aphidicola subsp. Baizongia pistaciae (strain Bp) protein is Ribosomal RNA small subunit methyltransferase I.